The primary structure comprises 473 residues: Probable acid phosphatase DDB_G0284755 (473 aa).

His94 functions as the Nucleophile in the catalytic mechanism. Asp359 acts as the Proton donor in catalysis.

Belongs to the histidine acid phosphatase family.

It catalyses the reaction a phosphate monoester + H2O = an alcohol + phosphate. This is Probable acid phosphatase DDB_G0284755 from Dictyostelium discoideum (Social amoeba).